The primary structure comprises 92 residues: MAVKIRLTRLGSKRNPFYRIVVADARSPRDGRIIEQIGTYNPVDNSGENKVTIDEELALKWLKDGAKPTDTVHNILSREGILKTFDEQRHSK.

This sequence belongs to the bacterial ribosomal protein bS16 family.

The polypeptide is Small ribosomal subunit protein bS16 (Staphylococcus carnosus (strain TM300)).